Here is a 445-residue protein sequence, read N- to C-terminus: Tubulin beta chain (445 aa).

The MREI motif signature appears at 1 to 4 (MREI). 8 residues coordinate GTP: glutamine 11, glutamate 69, serine 138, glycine 142, threonine 143, glycine 144, asparagine 204, and asparagine 226. Glutamate 69 is a Mg(2+) binding site. A disordered region spans residues 421-445 (EYQQYQDATAEEEGEGEEEGDEEVA). The segment covering 429–445 (TAEEEGEGEEEGDEEVA) has biased composition (acidic residues). At glutamate 438 the chain carries 5-glutamyl polyglutamate.

Belongs to the tubulin family. As to quaternary structure, dimer of alpha and beta chains. A typical microtubule is a hollow water-filled tube with an outer diameter of 25 nm and an inner diameter of 15 nM. Alpha-beta heterodimers associate head-to-tail to form protofilaments running lengthwise along the microtubule wall with the beta-tubulin subunit facing the microtubule plus end conferring a structural polarity. Microtubules usually have 13 protofilaments but different protofilament numbers can be found in some organisms and specialized cells. Mg(2+) is required as a cofactor. In terms of processing, some glutamate residues at the C-terminus are polyglycylated, resulting in polyglycine chains on the gamma-carboxyl group. Glycylation is mainly limited to tubulin incorporated into axonemes (cilia and flagella) whereas glutamylation is prevalent in neuronal cells, centrioles, axonemes, and the mitotic spindle. Both modifications can coexist on the same protein on adjacent residues, and lowering polyglycylation levels increases polyglutamylation, and reciprocally. The precise function of polyglycylation is still unclear. Post-translationally, some glutamate residues at the C-terminus are polyglutamylated, resulting in polyglutamate chains on the gamma-carboxyl group. Polyglutamylation plays a key role in microtubule severing by spastin (SPAST). SPAST preferentially recognizes and acts on microtubules decorated with short polyglutamate tails: severing activity by SPAST increases as the number of glutamates per tubulin rises from one to eight, but decreases beyond this glutamylation threshold. As to expression, brain.

The protein resides in the cytoplasm. It is found in the cytoskeleton. Its function is as follows. Tubulin is the major constituent of microtubules, a cylinder consisting of laterally associated linear protofilaments composed of alpha- and beta-tubulin heterodimers. Microtubules grow by the addition of GTP-tubulin dimers to the microtubule end, where a stabilizing cap forms. Below the cap, tubulin dimers are in GDP-bound state, owing to GTPase activity of alpha-tubulin. The chain is Tubulin beta chain from Pseudopleuronectes americanus (Winter flounder).